We begin with the raw amino-acid sequence, 324 residues long: MKKKIWKSSASIEDLIKRSNIISNIRLFFSKKNILEVETPILSRSTVTDVHLTSFETNYISSDNIDELKLWLTTSPEYHMKRLLASESGSIYQICHSFRNKEIGRYHNPEFTMLEWYQPFCSMKKFIKEIDIFLQIILKCNKSDKVSYQDLFIDFLKIDPLCTNLLELHQISKKLKLDHLTHSENNLNKLIQLLFTLKIEPNIGKEKPLFVYHFPAEQASLAAINLKDPRISERFEIFFKGIELGNGFYELIDVNEQKKRFIRDNKERRSMNLPTRKIDNFFLSALSYGLPPCSGVAIGLDRLIMLILNKKSIHEVIAFPVDRC.

75–77 is a binding site for substrate; that stretch reads SPE. ATP contacts are provided by residues 99 to 101 and Asn108; that span reads RNK. Substrate is bound at residue Tyr117. 243–244 is a binding site for ATP; it reads EL. A substrate-binding site is contributed by Glu250. An ATP-binding site is contributed by Gly299.

The protein belongs to the class-II aminoacyl-tRNA synthetase family. EpmA subfamily. Homodimer.

The enzyme catalyses D-beta-lysine + L-lysyl-[protein] + ATP = N(6)-((3R)-3,6-diaminohexanoyl)-L-lysyl-[protein] + AMP + diphosphate + H(+). Its function is as follows. With EpmB is involved in the beta-lysylation step of the post-translational modification of translation elongation factor P (EF-P). Catalyzes the ATP-dependent activation of (R)-beta-lysine produced by EpmB, forming a lysyl-adenylate, from which the beta-lysyl moiety is then transferred to the epsilon-amino group of a conserved specific lysine residue in EF-P. This is Elongation factor P--(R)-beta-lysine ligase from Buchnera aphidicola subsp. Acyrthosiphon pisum (strain APS) (Acyrthosiphon pisum symbiotic bacterium).